The following is a 918-amino-acid chain: Hexokinase-1 (918 aa).

At Met1 the chain carries N-acetylmethionine. Residues Met1–Tyr10 form a mitochondrial-binding peptide (MBP) region. 2 Hexokinase domains span residues Asp16–Ala458 and Ala464–Ala906. ATP is bound by residues Arg30 and Asp84–Ser89. The tract at residues Asp73 to Val207 is hexokinase small subdomain 1. Asp84–Ser88 is a binding site for D-glucose 6-phosphate. Residues Ser155, Thr172–Lys173, and Asn208–Asp209 contribute to the D-glucose site. The tract at residues Asn208–Ser447 is hexokinase large subdomain 1. D-glucose 6-phosphate contacts are provided by Asp209 and Thr232. D-glucose is bound by residues Asn235, Glu260, and Gln291–Glu294. The residue at position 337 (Ser337) is a Phosphoserine. Asp413–Ser415 contacts D-glucose 6-phosphate. ATP is bound at residue Arg425–Arg426. Residues Thr449, Asp532–Thr536, and Ser603 contribute to the D-glucose 6-phosphate site. The interval Asp521–Val655 is hexokinase small subdomain 2. Asp532–Asn537 contributes to the ATP binding site. D-glucose is bound by residues Thr620–Lys621 and Asn656–Asp657. Residues Asn656 to Asp895 form a hexokinase large subdomain 2 region. 2 residues coordinate D-glucose 6-phosphate: Asp657 and Thr680. Residue Thr680 participates in ATP binding. Residues Asn683, Glu708, and Glu742 each contribute to the D-glucose site. Residues Gly747–Met748, Thr784–Ser788, and Thr863–Leu867 contribute to the ATP site. D-glucose 6-phosphate is bound by residues Asp861–Thr863 and Ser897.

The protein belongs to the hexokinase family. In terms of assembly, monomer. Interacts with RABL2/RABL2A; binds preferentially to GTP-bound RABL2. Interacts with VDAC1. The HK1-VDAC1 complex interacts with ATF2. Interacts (via N-terminal spermatogenic cell-specific region) with PFKM (via C-terminus). Interacts with SMAD5. As to expression, expressed in flagella of epididymal sperm.

The protein resides in the mitochondrion outer membrane. The protein localises to the cytoplasm. It is found in the cytosol. It catalyses the reaction a D-hexose + ATP = a D-hexose 6-phosphate + ADP + H(+). It carries out the reaction D-fructose + ATP = D-fructose 6-phosphate + ADP + H(+). The catalysed reaction is D-glucose + ATP = D-glucose 6-phosphate + ADP + H(+). The enzyme catalyses D-mannose + ATP = D-mannose 6-phosphate + ADP + H(+). It catalyses the reaction D-glucosamine + ATP = D-glucosamine 6-phosphate + ADP + H(+). It participates in carbohydrate metabolism; hexose metabolism. Its pathway is carbohydrate degradation; glycolysis; D-glyceraldehyde 3-phosphate and glycerone phosphate from D-glucose: step 1/4. Hexokinase is an allosteric enzyme inhibited by its product D-glucose 6-phosphate. Hexokinase activity is inhibited by N-acetyl-D-glucosamine. In terms of biological role, catalyzes the phosphorylation of various hexoses, such as D-glucose, D-glucosamine, D-fructose, D-mannose and 2-deoxy-D-glucose, to hexose 6-phosphate (D-glucose 6-phosphate, D-glucosamine 6-phosphate, D-fructose 6-phosphate, D-mannose 6-phosphate and 2-deoxy-D-glucose 6-phosphate, respectively). Mediates the initial step of glycolysis by catalyzing phosphorylation of D-glucose to D-glucose 6-phosphate. Involved in innate immunity and inflammation by acting as a pattern recognition receptor for bacterial peptidoglycan. When released in the cytosol, N-acetyl-D-glucosamine component of bacterial peptidoglycan inhibits the hexokinase activity of HK1 and causes its dissociation from mitochondrial outer membrane, thereby activating the NLRP3 inflammasome. This chain is Hexokinase-1, found in Rattus norvegicus (Rat).